The chain runs to 511 residues: Aldehyde dehydrogenase 2, mitochondrial (511 aa).

The transit peptide at 1–21 (MSKSKTKTDKRNQSSLSRIKL) directs the protein to the mitochondrion. The segment at 72–92 (VSEKSQHDSTEEDITQVSEKS) is disordered. 274 to 279 (GSTLVG) serves as a coordination point for NAD(+). Glu297 functions as the Proton acceptor in the catalytic mechanism. The active-site Nucleophile is the Cys331.

Belongs to the aldehyde dehydrogenase family.

It localises to the mitochondrion matrix. The enzyme catalyses an aldehyde + NAD(+) + H2O = a carboxylate + NADH + 2 H(+). It participates in alcohol metabolism; ethanol degradation; acetate from ethanol: step 2/2. In Saccharomyces cerevisiae (Baker's yeast), this protein is Aldehyde dehydrogenase 2, mitochondrial (ALD2).